We begin with the raw amino-acid sequence, 78 residues long: Putative permease-like protein YdzE (78 aa).

The next 3 helical transmembrane spans lie at 2–22, 27–47, and 49–69; these read YLGI…LQLL, GGLF…ILLG, and QIGG…LLVI. Residues 2–70 form the EamA domain; that stretch reads YLGIVSTACA…ILSGVLLVIK (69 aa).

The protein belongs to the EamA transporter family.

It is found in the cell membrane. This chain is Putative permease-like protein YdzE (ydzE), found in Bacillus subtilis (strain 168).